Here is a 92-residue protein sequence, read N- to C-terminus: Large ribosomal subunit protein bL25 (92 aa).

Belongs to the bacterial ribosomal protein bL25 family. In terms of assembly, part of the 50S ribosomal subunit; part of the 5S rRNA/L5/L18/L25 subcomplex. Contacts the 5S rRNA. Binds to the 5S rRNA independently of L5 and L18.

Functionally, this is one of the proteins that binds to the 5S RNA in the ribosome where it forms part of the central protuberance. The polypeptide is Large ribosomal subunit protein bL25 (Aliivibrio fischeri (strain MJ11) (Vibrio fischeri)).